We begin with the raw amino-acid sequence, 156 residues long: Putative pre-16S rRNA nuclease (156 aa).

The protein belongs to the YqgF nuclease family.

Its subcellular location is the cytoplasm. Could be a nuclease involved in processing of the 5'-end of pre-16S rRNA. In Nocardioides sp. (strain ATCC BAA-499 / JS614), this protein is Putative pre-16S rRNA nuclease.